Consider the following 443-residue polypeptide: ATP-dependent protease ATPase subunit HslU (443 aa).

ATP contacts are provided by residues I18 and 60 to 65; that span reads GVGKTE. The interval 137–156 is disordered; the sequence is PPPRDAWGQNEQSEDTSNTR. A compositionally biased stretch (polar residues) spans 145 to 156; sequence QNEQSEDTSNTR. Positions 256, 321, and 393 each coordinate ATP.

Belongs to the ClpX chaperone family. HslU subfamily. In terms of assembly, a double ring-shaped homohexamer of HslV is capped on each side by a ring-shaped HslU homohexamer. The assembly of the HslU/HslV complex is dependent on binding of ATP.

It localises to the cytoplasm. ATPase subunit of a proteasome-like degradation complex; this subunit has chaperone activity. The binding of ATP and its subsequent hydrolysis by HslU are essential for unfolding of protein substrates subsequently hydrolyzed by HslV. HslU recognizes the N-terminal part of its protein substrates and unfolds these before they are guided to HslV for hydrolysis. This is ATP-dependent protease ATPase subunit HslU from Vibrio vulnificus (strain YJ016).